Reading from the N-terminus, the 877-residue chain is Lipophilic envelope-spanning tunnel protein B (877 aa).

The Cytoplasmic segment spans residues 1 to 19 (MSQETPASTTEAQIKNKRR). The chain crosses the membrane as a helical span at residues 20–40 (ISPFWLLPFIALMIASWLIWD). The Periplasmic portion of the chain corresponds to 41-877 (SYQDRGNTVT…WREWGTALPK (837 aa)). MCE/MlaD regions lie at residues 46-149 (GNTV…VALD), 160-272 (DLMI…GLYE), 279-382 (RGVI…VVPG), 391-499 (DVLT…PLYA), 515-625 (TTVS…ILYA), 634-737 (GGQI…LQEA), and 746-862 (DGLS…LLQE).

Belongs to the PqiB family. As to quaternary structure, homohexamer. May interact with LetA in the inner membrane. May also interact with partners in the outer membrane.

The protein localises to the cell inner membrane. Its function is as follows. Forms a tunnel that spans the entire periplasmic space. Is probably involved in the transport of lipids between the inner membrane and the outer membrane through the tunnel. Forms a dynamic tunnel sufficiently long to mediate lipid transport directly between the two membranes without the need for a shuttle protein. Binds phospholipids. Lipids bind inside the tunnel. Required for outer membrane homeostasis. Contributes to membrane integrity. The polypeptide is Lipophilic envelope-spanning tunnel protein B (Escherichia coli (strain K12)).